We begin with the raw amino-acid sequence, 84 residues long: Large ribosomal subunit protein eL34 (84 aa).

It belongs to the eukaryotic ribosomal protein eL34 family.

The chain is Large ribosomal subunit protein eL34 (ribL34e) from Pyrobaculum aerophilum (strain ATCC 51768 / DSM 7523 / JCM 9630 / CIP 104966 / NBRC 100827 / IM2).